A 199-amino-acid chain; its full sequence is Recombination protein RecR (199 aa).

The C4-type zinc finger occupies 57–72 (CQSCRTFTEQDLCPIC). Positions 81-176 (GIICVVETPA…VISRIAHGVP (96 aa)) constitute a Toprim domain.

This sequence belongs to the RecR family.

Functionally, may play a role in DNA repair. It seems to be involved in an RecBC-independent recombinational process of DNA repair. It may act with RecF and RecO. This is Recombination protein RecR from Shewanella frigidimarina (strain NCIMB 400).